The following is a 99-amino-acid chain: Teretoxin Tsu6.4 (99 aa).

The N-terminal stretch at 1 to 21 (MRLLLILVLLTPVIVAFSVDE) is a signal peptide. Residues 22-53 (ELNNADGANAASFTADQEVRHKRNLFPAIARR) constitute a propeptide that is removed on maturation.

In terms of processing, contains 3 disulfide bonds. In terms of tissue distribution, expressed by the venom duct.

Its subcellular location is the secreted. This chain is Teretoxin Tsu6.4, found in Terebra subulata (Chocolate spotted auger).